Reading from the N-terminus, the 185-residue chain is Intraflagellar transport protein 22 homolog (185 aa).

GTP-binding positions include 10–17, 63–67, and 123–126; these read GPCESGKT, DCGGD, and HKPG. Ser-137 carries the post-translational modification Phosphoserine.

It belongs to the small GTPase superfamily. Rab family. As to quaternary structure, component of the IFT complex B, at least composed of IFT20, IFT22, IFT25, IFT27, IFT46, IFT52, TRAF3IP1/IFT54, IFT57, IFT74, IFT80, IFT81, and IFT88. Interacts with IFT88. Interacts with CFAP61.

Its subcellular location is the cell projection. The protein localises to the cilium. Its function is as follows. Small GTPase-like component of the intraflagellar transport (IFT) complex B. The polypeptide is Intraflagellar transport protein 22 homolog (IFT22) (Macaca fascicularis (Crab-eating macaque)).